Reading from the N-terminus, the 69-residue chain is UPF0150 protein Ta0767 (69 aa).

The protein belongs to the UPF0150 family.

The protein is UPF0150 protein Ta0767 of Thermoplasma acidophilum (strain ATCC 25905 / DSM 1728 / JCM 9062 / NBRC 15155 / AMRC-C165).